The following is a 382-amino-acid chain: MTTSTVKNNLLGLTQPEMEKFFDSIGEKRFRAGQVMKWIHHFGVDDFDAMTNVSKALREKLKAVAEVRGPEVVSEDISSDGTRKWVVRVASGSCVETVYIPQGKRGTLCVSSQAGCALDCSFCSTGKQGFNSNLTAAEVIGQVWIANKSFGSVPATIDRAITNVVMMGMGEPLLNFDNVVAAMHLMMDDLGYGISKRRVTLSTSGVVPMIDELAKHIDVSLALSLHAPNDALRNQLVPINKKYPLKMLLESCQRYMSALGEKRVLTIEYTLLKDVNDKLEHAVEMIELLKDIPCKINLIPFNPFPHSGYERPSNNAIRRFQDQLHQAGFNVTVRTTRGEDIDAACGQLVGQVLDRTRRSERYIAVRELSADSDLAQNAANTN.

E96 serves as the catalytic Proton acceptor. The 241-residue stretch at 102 to 342 (QGKRGTLCVS…VRTTRGEDID (241 aa)) folds into the Radical SAM core domain. C109 and C345 form a disulfide bridge. Positions 116, 120, and 123 each coordinate [4Fe-4S] cluster. S-adenosyl-L-methionine-binding positions include 170–171 (GE), S202, 224–226 (SLH), and N302. The active-site S-methylcysteine intermediate is the C345.

This sequence belongs to the radical SAM superfamily. RlmN family. The cofactor is [4Fe-4S] cluster.

The protein resides in the cytoplasm. The catalysed reaction is adenosine(2503) in 23S rRNA + 2 reduced [2Fe-2S]-[ferredoxin] + 2 S-adenosyl-L-methionine = 2-methyladenosine(2503) in 23S rRNA + 5'-deoxyadenosine + L-methionine + 2 oxidized [2Fe-2S]-[ferredoxin] + S-adenosyl-L-homocysteine. The enzyme catalyses adenosine(37) in tRNA + 2 reduced [2Fe-2S]-[ferredoxin] + 2 S-adenosyl-L-methionine = 2-methyladenosine(37) in tRNA + 5'-deoxyadenosine + L-methionine + 2 oxidized [2Fe-2S]-[ferredoxin] + S-adenosyl-L-homocysteine. In terms of biological role, specifically methylates position 2 of adenine 2503 in 23S rRNA and position 2 of adenine 37 in tRNAs. m2A2503 modification seems to play a crucial role in the proofreading step occurring at the peptidyl transferase center and thus would serve to optimize ribosomal fidelity. This Pseudomonas fluorescens (strain Pf0-1) protein is Dual-specificity RNA methyltransferase RlmN.